The following is a 677-amino-acid chain: Secretogranin-1 (677 aa).

The N-terminal stretch at 1–20 (MQPAMLLGLLGAAALAAVSS) is a signal peptide. C36 and C57 are oxidised to a cystine. Disordered regions lie at residues 63 to 505 (KSGK…RQYE) and 531 to 558 (NSDF…VTLT). Basic and acidic residues predominate over residues 64–90 (SGKEVKGEEKGENQNSKFEVRLLRDPA). Residues S93, S99, and S100 each carry the phosphoserine modification. S93 carries an O-linked (Xyl...) (chondroitin sulfate) serine glycan. T115 carries an O-linked (GalNAc...) threonine glycan. Basic and acidic residues predominate over residues 118-133 (GNEKWTEGGGHSREGV). 4 positions are modified to phosphoserine: S129, S147, S190, and S220. 2 stretches are compositionally biased toward basic and acidic residues: residues 148 to 192 (KEAK…DSGE) and 200 to 249 (KRSE…KPQE). The O-linked (Xyl...) (chondroitin sulfate) serine glycan is linked to S237. The segment covering 251 to 280 (TDQDQSQEESQEGEEGEEGEEGEEGEEDSA) has biased composition (acidic residues). S256, S260, S300, S301, S318, and S342 each carry phosphoserine. A compositionally biased stretch (basic and acidic residues) spans 306 to 322 (PLSEERRPSPKESKEAD). Y348 is subject to Sulfotyrosine. Composition is skewed to basic and acidic residues over residues 363 to 409 (RGSE…ERSY) and 421 to 455 (GREP…DTAK). A phosphoserine mark is found at S365, S375, and S378. Y472 is modified (sulfotyrosine). Basic and acidic residues predominate over residues 491-504 (EESREEVRFPDRQY). Residues S493, S532, and S543 each carry the phosphoserine modification. Sulfotyrosine occurs at positions 566 and 624. Residues 622-646 (DFYDSEEQMGPHQEANDEKARADQR) are disordered. At S626 the chain carries Phosphoserine. Basic and acidic residues predominate over residues 635 to 646 (EANDEKARADQR).

The protein belongs to the chromogranin/secretogranin protein family. Interacts with ITPR1 in the secretory granules.

The protein localises to the secreted. Its function is as follows. Secretogranin-1 is a neuroendocrine secretory granule protein, which may be the precursor for other biologically active peptides. The chain is Secretogranin-1 (Chgb) from Mus musculus (Mouse).